The sequence spans 88 residues: Small ribosomal subunit protein uS17 (88 aa).

It belongs to the universal ribosomal protein uS17 family. Part of the 30S ribosomal subunit.

Its function is as follows. One of the primary rRNA binding proteins, it binds specifically to the 5'-end of 16S ribosomal RNA. In Mycoplasmopsis agalactiae (strain NCTC 10123 / CIP 59.7 / PG2) (Mycoplasma agalactiae), this protein is Small ribosomal subunit protein uS17.